Reading from the N-terminus, the 91-residue chain is Islet amyloid polypeptide (91 aa).

Residues 1 to 22 (MCLLQLPVVLLLLSAALNTLKA) form the signal peptide. Positions 23–34 (TPIASDTDHRVD) are excised as a propeptide. A disulfide bridge connects residues Cys38 and Cys43. Tyr73 carries the post-translational modification Tyrosine amide. Positions 77–91 (NAEVVDVELLHYLPL) are excised as a propeptide.

It belongs to the calcitonin family. As to quaternary structure, can form homodimers. Interacts with IDE and INS. Interaction with INS inhibits homodimerization and fibril formation.

It localises to the secreted. Amylin/IAPP is a glucoregulatory peptide hormone that plays an important role in the regulation of energy homeostasis. Selectively inhibits insulin-stimulated glucose utilization and glycogen deposition in muscle, while not affecting adipocyte glucose metabolism. IAPP function is mediated by the CALCR-RAMPs (AMYRs) receptor complexes. Amylin can also bind CALCR receptor in the absence of RAMPs, although it is more selective for AMYRs. The polypeptide is Islet amyloid polypeptide (IAPP) (Octodon degus (Degu)).